A 1580-amino-acid chain; its full sequence is Pentafunctional AROM polypeptide (1580 aa).

Residues methionine 1–asparagine 381 are 3-dehydroquinate synthase. NAD(+)-binding positions include aspartate 44 to threonine 46, glutamate 81 to lysine 84, glycine 114 to valine 116, and aspartate 119. Arginine 130 serves as a coordination point for 7-phospho-2-dehydro-3-deoxy-D-arabino-heptonate. Threonine 139–threonine 140 is an NAD(+) binding site. Aspartate 146 and lysine 152 together coordinate 7-phospho-2-dehydro-3-deoxy-D-arabino-heptonate. Lysine 161 provides a ligand contact to NAD(+). Asparagine 162 is a binding site for 7-phospho-2-dehydro-3-deoxy-D-arabino-heptonate. Residues phenylalanine 179 to threonine 182 and asparagine 190 contribute to the NAD(+) site. Residue glutamate 194 coordinates Zn(2+). Lysine 247 contacts 7-phospho-2-dehydro-3-deoxy-D-arabino-heptonate. Glutamate 257 (proton acceptor; for 3-dehydroquinate synthase activity) is an active-site residue. Residues arginine 261–asparagine 265 and histidine 268 each bind 7-phospho-2-dehydro-3-deoxy-D-arabino-heptonate. Histidine 268 is a Zn(2+) binding site. Histidine 272 functions as the Proton acceptor; for 3-dehydroquinate synthase activity in the catalytic mechanism. 7-phospho-2-dehydro-3-deoxy-D-arabino-heptonate contacts are provided by histidine 284 and lysine 353. Histidine 284 is a Zn(2+) binding site. The tract at residues valine 394–alanine 838 is EPSP synthase. The active-site For EPSP synthase activity is the cysteine 820. The tract at residues alanine 857–serine 1048 is shikimate kinase. Residue glycine 863–threonine 870 coordinates ATP. The segment at leucine 1049–glutamate 1269 is 3-dehydroquinase. Histidine 1172 acts as the Proton acceptor; for 3-dehydroquinate dehydratase activity in catalysis. The active-site Schiff-base intermediate with substrate; for 3-dehydroquinate dehydratase activity is the lysine 1200. The tract at residues serine 1282–isoleucine 1580 is shikimate dehydrogenase.

This sequence in the N-terminal section; belongs to the sugar phosphate cyclases superfamily. Dehydroquinate synthase family. In the 2nd section; belongs to the EPSP synthase family. The protein in the 3rd section; belongs to the shikimate kinase family. It in the 4th section; belongs to the type-I 3-dehydroquinase family. This sequence in the C-terminal section; belongs to the shikimate dehydrogenase family. As to quaternary structure, homodimer. Zn(2+) serves as cofactor.

The protein localises to the cytoplasm. It catalyses the reaction 7-phospho-2-dehydro-3-deoxy-D-arabino-heptonate = 3-dehydroquinate + phosphate. The enzyme catalyses 3-dehydroquinate = 3-dehydroshikimate + H2O. It carries out the reaction shikimate + NADP(+) = 3-dehydroshikimate + NADPH + H(+). The catalysed reaction is shikimate + ATP = 3-phosphoshikimate + ADP + H(+). It catalyses the reaction 3-phosphoshikimate + phosphoenolpyruvate = 5-O-(1-carboxyvinyl)-3-phosphoshikimate + phosphate. It participates in metabolic intermediate biosynthesis; chorismate biosynthesis; chorismate from D-erythrose 4-phosphate and phosphoenolpyruvate: step 2/7. It functions in the pathway metabolic intermediate biosynthesis; chorismate biosynthesis; chorismate from D-erythrose 4-phosphate and phosphoenolpyruvate: step 3/7. Its pathway is metabolic intermediate biosynthesis; chorismate biosynthesis; chorismate from D-erythrose 4-phosphate and phosphoenolpyruvate: step 4/7. The protein operates within metabolic intermediate biosynthesis; chorismate biosynthesis; chorismate from D-erythrose 4-phosphate and phosphoenolpyruvate: step 5/7. It participates in metabolic intermediate biosynthesis; chorismate biosynthesis; chorismate from D-erythrose 4-phosphate and phosphoenolpyruvate: step 6/7. Functionally, the AROM polypeptide catalyzes 5 consecutive enzymatic reactions in prechorismate polyaromatic amino acid biosynthesis. The polypeptide is Pentafunctional AROM polypeptide (Uncinocarpus reesii (strain UAMH 1704)).